We begin with the raw amino-acid sequence, 838 residues long: Protein translocase subunit SecA (838 aa).

Residues Q86, 104-108, and D493 each bind ATP; that span reads GEGKT. Disordered regions lie at residues 517-536 and 789-838; these read RRID…PGSS and KVAE…CCGQ. Residues 801-819 are compositionally biased toward basic and acidic residues; it reads TDGDSKAKRQPVRKKETVG. Zn(2+) contacts are provided by C824, C826, C835, and C836.

It belongs to the SecA family. Monomer and homodimer. Part of the essential Sec protein translocation apparatus which comprises SecA, SecYEG and auxiliary proteins SecDF. Other proteins may also be involved. The cofactor is Zn(2+).

The protein resides in the cell membrane. It is found in the cytoplasm. The catalysed reaction is ATP + H2O + cellular proteinSide 1 = ADP + phosphate + cellular proteinSide 2.. In terms of biological role, part of the Sec protein translocase complex. Interacts with the SecYEG preprotein conducting channel. Has a central role in coupling the hydrolysis of ATP to the transfer of proteins into and across the cell membrane, serving as an ATP-driven molecular motor driving the stepwise translocation of polypeptide chains across the membrane. This is Protein translocase subunit SecA from Halalkalibacterium halodurans (strain ATCC BAA-125 / DSM 18197 / FERM 7344 / JCM 9153 / C-125) (Bacillus halodurans).